Consider the following 640-residue polypeptide: Threonine--tRNA ligase (640 aa).

The region spanning Met-1–Thr-61 is the TGS domain. The segment at Asp-242–Pro-533 is catalytic. Residues Cys-333, His-384, and His-510 each coordinate Zn(2+).

The protein belongs to the class-II aminoacyl-tRNA synthetase family. In terms of assembly, homodimer. Zn(2+) serves as cofactor.

The protein localises to the cytoplasm. It catalyses the reaction tRNA(Thr) + L-threonine + ATP = L-threonyl-tRNA(Thr) + AMP + diphosphate + H(+). Functionally, catalyzes the attachment of threonine to tRNA(Thr) in a two-step reaction: L-threonine is first activated by ATP to form Thr-AMP and then transferred to the acceptor end of tRNA(Thr). Also edits incorrectly charged L-seryl-tRNA(Thr). The polypeptide is Threonine--tRNA ligase (Pseudomonas aeruginosa (strain LESB58)).